Here is a 432-residue protein sequence, read N- to C-terminus: Asparagine--tRNA ligase 2 (432 aa).

The protein belongs to the class-II aminoacyl-tRNA synthetase family. As to quaternary structure, homodimer.

It localises to the cytoplasm. The enzyme catalyses tRNA(Asn) + L-asparagine + ATP = L-asparaginyl-tRNA(Asn) + AMP + diphosphate + H(+). The sequence is that of Asparagine--tRNA ligase 2 (asnS2) from Lactiplantibacillus plantarum (strain ATCC BAA-793 / NCIMB 8826 / WCFS1) (Lactobacillus plantarum).